A 289-amino-acid polypeptide reads, in one-letter code: Serine/threonine-protein phosphatase Pgam5, mitochondrial (289 aa).

It belongs to the phosphoglycerate mutase family. BPG-dependent PGAM subfamily. In terms of assembly, interacts with Pk92B/ASK1.

Its subcellular location is the mitochondrion outer membrane. The enzyme catalyses O-phospho-L-seryl-[protein] + H2O = L-seryl-[protein] + phosphate. The catalysed reaction is O-phospho-L-threonyl-[protein] + H2O = L-threonyl-[protein] + phosphate. Functionally, displays phosphatase activity for serine/threonine residues, and dephosphorylates and activates Pk92B kinase. Has apparently no phosphoglycerate mutase activity. The polypeptide is Serine/threonine-protein phosphatase Pgam5, mitochondrial (Drosophila grimshawi (Hawaiian fruit fly)).